A 314-amino-acid polypeptide reads, in one-letter code: Mitochondrial MRF1 N(5)-glutamine methyltransferase MTQ1 (314 aa).

Residues 118 to 122 (FTGTG), Asp-141, and Asn-188 each bind S-adenosyl-L-methionine. Position 188–191 (188–191 (NPPY)) interacts with substrate.

It belongs to the protein N5-glutamine methyltransferase family.

It is found in the mitochondrion. The catalysed reaction is L-glutaminyl-[peptide chain release factor] + S-adenosyl-L-methionine = N(5)-methyl-L-glutaminyl-[peptide chain release factor] + S-adenosyl-L-homocysteine + H(+). Its function is as follows. Methylates MRF1 on 'Gln-287' using S-adenosyl L-methionine as methyl donor. The protein is Mitochondrial MRF1 N(5)-glutamine methyltransferase MTQ1 (MTQ1) of Saccharomyces cerevisiae (strain ATCC 204508 / S288c) (Baker's yeast).